A 226-amino-acid polypeptide reads, in one-letter code: Large ribosomal subunit protein uL1 (226 aa).

It belongs to the universal ribosomal protein uL1 family. In terms of assembly, part of the 50S ribosomal subunit.

Binds directly to 23S rRNA. The L1 stalk is quite mobile in the ribosome, and is involved in E site tRNA release. Its function is as follows. Protein L1 is also a translational repressor protein, it controls the translation of the L11 operon by binding to its mRNA. The sequence is that of Large ribosomal subunit protein uL1 from Mycoplasma pneumoniae (strain ATCC 29342 / M129 / Subtype 1) (Mycoplasmoides pneumoniae).